Reading from the N-terminus, the 463-residue chain is Protein MRG3-like (463 aa).

Residues 54–74 form a helical membrane-spanning segment; it reads WVLSTGIVSFIAFNIWWVYWP. 4 TPR repeats span residues 84–118, 128–161, 358–389, and 409–442; these read KILR…CKAE, TGIE…FYNE, ELIR…ANEN, and SLAH…SEMI.

It belongs to the MGR3 family.

It is found in the membrane. This is Protein MRG3-like from Saccharomyces cerevisiae (strain ATCC 204508 / S288c) (Baker's yeast).